A 179-amino-acid chain; its full sequence is Large ribosomal subunit protein uL6 (179 aa).

The protein belongs to the universal ribosomal protein uL6 family. In terms of assembly, part of the 50S ribosomal subunit.

Its function is as follows. This protein binds to the 23S rRNA, and is important in its secondary structure. It is located near the subunit interface in the base of the L7/L12 stalk, and near the tRNA binding site of the peptidyltransferase center. The polypeptide is Large ribosomal subunit protein uL6 (Finegoldia magna (strain ATCC 29328 / DSM 20472 / WAL 2508) (Peptostreptococcus magnus)).